We begin with the raw amino-acid sequence, 993 residues long: Isoleucine--tRNA ligase (993 aa).

Positions 64-74 (PYANGNIHIGH) match the 'HIGH' region motif. Glu621 is an L-isoleucyl-5'-AMP binding site. Residues 662 to 666 (KMSKS) carry the 'KMSKS' region motif. ATP is bound at residue Lys665.

It belongs to the class-I aminoacyl-tRNA synthetase family. IleS type 1 subfamily. As to quaternary structure, monomer.

It is found in the cytoplasm. The enzyme catalyses tRNA(Ile) + L-isoleucine + ATP = L-isoleucyl-tRNA(Ile) + AMP + diphosphate. Catalyzes the attachment of isoleucine to tRNA(Ile). As IleRS can inadvertently accommodate and process structurally similar amino acids such as valine, to avoid such errors it has two additional distinct tRNA(Ile)-dependent editing activities. One activity is designated as 'pretransfer' editing and involves the hydrolysis of activated Val-AMP. The other activity is designated 'posttransfer' editing and involves deacylation of mischarged Val-tRNA(Ile). The sequence is that of Isoleucine--tRNA ligase from Mesorhizobium japonicum (strain LMG 29417 / CECT 9101 / MAFF 303099) (Mesorhizobium loti (strain MAFF 303099)).